Reading from the N-terminus, the 291-residue chain is Ribonuclease Z (291 aa).

Zn(2+)-binding residues include histidine 61, histidine 63, aspartate 65, histidine 66, histidine 133, aspartate 201, and histidine 257. Aspartate 65 (proton acceptor) is an active-site residue.

It belongs to the RNase Z family. In terms of assembly, homodimer. Requires Zn(2+) as cofactor.

The catalysed reaction is Endonucleolytic cleavage of RNA, removing extra 3' nucleotides from tRNA precursor, generating 3' termini of tRNAs. A 3'-hydroxy group is left at the tRNA terminus and a 5'-phosphoryl group is left at the trailer molecule.. Zinc phosphodiesterase, which displays some tRNA 3'-processing endonuclease activity. Probably involved in tRNA maturation, by removing a 3'-trailer from precursor tRNA. The sequence is that of Ribonuclease Z from Saccharolobus islandicus (strain Y.N.15.51 / Yellowstone #2) (Sulfolobus islandicus).